A 215-amino-acid polypeptide reads, in one-letter code: Pyrrolidone-carboxylate peptidase (215 aa).

Catalysis depends on residues glutamate 80, cysteine 143, and histidine 167.

Belongs to the peptidase C15 family. Homotetramer.

Its subcellular location is the cytoplasm. The catalysed reaction is Release of an N-terminal pyroglutamyl group from a polypeptide, the second amino acid generally not being Pro.. Removes 5-oxoproline from various penultimate amino acid residues except L-proline. This chain is Pyrrolidone-carboxylate peptidase, found in Bacillus cytotoxicus (strain DSM 22905 / CIP 110041 / 391-98 / NVH 391-98).